The following is a 356-amino-acid chain: MQKDALNNVHITDEQVLMTPEQLKAAFPLSLQQEAQIADSRKSISDIIAGRDPRLLVVCGPCSIHDPETALEYARRFKALAAEVSDSLYLVMRVYFEKPRTTVGWKGLINDPHMDGSFDVEAGLQIARKLLLELVNMGLPLATEALDPNSPQYLGDLFSWSAIGARTTESQTHREMASGLSMPVGFKNGTDGSLATAINAMRAAAQPHRFVGINQAGQVALLQTQGNPDGHVILRGGKAPNYSPADVAQCEKEMEQAGLRPSLMVDCSHGNSNKDYRRQPAVAESVVAQIKDGNRSIIGLMIESNIHEGNQSSEQPRSEMKYGVSVTDACISWEMTDALLREIHQDLNGQLTARVA.

It belongs to the class-I DAHP synthase family. Requires a divalent metal cation as cofactor.

It catalyses the reaction D-erythrose 4-phosphate + phosphoenolpyruvate + H2O = 7-phospho-2-dehydro-3-deoxy-D-arabino-heptonate + phosphate. The protein operates within metabolic intermediate biosynthesis; chorismate biosynthesis; chorismate from D-erythrose 4-phosphate and phosphoenolpyruvate: step 1/7. Specifically feedback inhibited by tyrosine with 50% inhibition observed at 9 microM tyrosine, pH 7.0. Functionally, stereospecific condensation of phosphoenolpyruvate (PEP) and D-erythrose-4-phosphate (E4P) giving rise to 3-deoxy-D-arabino-heptulosonate-7-phosphate (DAHP). The polypeptide is Phospho-2-dehydro-3-deoxyheptonate aldolase, Tyr-sensitive (aroF) (Escherichia coli (strain K12)).